The primary structure comprises 435 residues: Adenylosuccinate synthetase (435 aa).

GTP contacts are provided by residues 22-28 and 50-52; these read GDEGKGK and GHT. The active-site Proton acceptor is Asp23. Mg(2+)-binding residues include Asp23 and Gly50. Residues 23 to 26, 48 to 51, Thr140, Arg154, Gln235, Thr250, and Arg314 each bind IMP; these read DEGK and NAGH. His51 acts as the Proton donor in catalysis. A substrate-binding site is contributed by 310-316; it reads ATTGRKR. GTP-binding positions include Arg316, 342–344, and 424–426; these read KLD and SVG.

Belongs to the adenylosuccinate synthetase family. Homodimer. The cofactor is Mg(2+).

The protein resides in the cytoplasm. It carries out the reaction IMP + L-aspartate + GTP = N(6)-(1,2-dicarboxyethyl)-AMP + GDP + phosphate + 2 H(+). The protein operates within purine metabolism; AMP biosynthesis via de novo pathway; AMP from IMP: step 1/2. In terms of biological role, plays an important role in the de novo pathway of purine nucleotide biosynthesis. Catalyzes the first committed step in the biosynthesis of AMP from IMP. This is Adenylosuccinate synthetase from Chlorobaculum parvum (strain DSM 263 / NCIMB 8327) (Chlorobium vibrioforme subsp. thiosulfatophilum).